Here is a 250-residue protein sequence, read N- to C-terminus: Superoxide dismutase 1 copper chaperone (250 aa).

The HMA domain occupies 4–67; sequence SFEIVFAVPM…AIQSTGKDAI (64 aa). Cys-15, Cys-18, Cys-229, and Cys-231 together coordinate Cu cation.

It belongs to the CCS1 family. Cu(2+) serves as cofactor.

Its subcellular location is the cytoplasm. Its function is as follows. Copper chaperone for superoxide dismutase 1 (SOD1). Binds copper ions and delivers them specifically to SOD1. This is Superoxide dismutase 1 copper chaperone (CCS1) from Debaryomyces hansenii (strain ATCC 36239 / CBS 767 / BCRC 21394 / JCM 1990 / NBRC 0083 / IGC 2968) (Yeast).